We begin with the raw amino-acid sequence, 200 residues long: LexA repressor (200 aa).

Catalysis depends on for autocatalytic cleavage activity residues Ser-121 and Lys-158.

Belongs to the peptidase S24 family. In terms of assembly, homodimer.

It catalyses the reaction Hydrolysis of Ala-|-Gly bond in repressor LexA.. Its function is as follows. Binds a consensus sequence 5'-TGTTC-N(4)-GAACA-3'; some genes have a tandem consensus sequence and their binding is cooperative. Binds to the promoters of a number of genes, including lexA and splB. Represses a number of genes involved in the response to DNA damage (SOS response). This Opitutus terrae (strain DSM 11246 / JCM 15787 / PB90-1) protein is LexA repressor.